The primary structure comprises 105 residues: Ribosomal silencing factor RsfS (105 aa).

It belongs to the Iojap/RsfS family. Interacts with ribosomal protein uL14 (rplN).

It is found in the cytoplasm. Its function is as follows. Functions as a ribosomal silencing factor. Interacts with ribosomal protein uL14 (rplN), blocking formation of intersubunit bridge B8. Prevents association of the 30S and 50S ribosomal subunits and the formation of functional ribosomes, thus repressing translation. The polypeptide is Ribosomal silencing factor RsfS (Escherichia coli O6:H1 (strain CFT073 / ATCC 700928 / UPEC)).